An 899-amino-acid chain; its full sequence is MEPVTKWSPKQVVDWTRGLDDCLQQYVHKFEREKINGEQLLQISHQDLEELGVTRIGHQELVLEAVDLLCALNYGLETDNMKNLVLKLRASSHNLQNYISSRRKSPAYDGNTSRKAPNEFLTSVVELIGAAKALLAWLDRAPFTGITDFSVTKNKIIQLCLDLTTTVQKDCFVAEMEDKVLTVVKVLNGICDKTIRSTTDPVMSQCACLEEVHLPNIKPGEGLGMYIKSTYDGLHVITGTTENSPADRSQKIHAGDEVIQVNQQTVVGWQLKNLVKKLRENPTGVVLLLKKRPTGSFNFTPAPLKNLRWKPPLVQTSPPPATTQSPESTMDTSLKKEKSAILDLYIPPPPAVPYSPRDENGSFVYGGSSKCKQPLPGPKGSESPNSFLDQESRRRRFTIADSDQLPGYSVETNILPTKMREKTPSYGKPRPLSMPADGNWMGIVDPFARPRGHGRKAFVSTKMTSYMAIDGSALVPLRQKPRRKTQGFLTMSRRRISCKDLGHADCQGWLYKKKEKGSFLSNKWKKFWVILKGSSLYWYSNQMAEKADGFVNLPDFTVERASECKKKHAFKISHPQIKTFYFAAENVQEMNVWLNKLGSAVIHQESTTKDEECYSESEQEDPEIAAETPPPPHASQTQSLTAQQASSSSPSLSGTSYSFSSLENTVKTPSSFPSSLSKERQSLPDTVNSLSAAEDEGQPITFAVQVHSPVPSEAGIHKALENSFVTSESGFLNSLSSDDTSSLSSNHDHLTVPDKPAGSKIMDKEETKVSEDDEMEKLYKSLEQASLSPLGDRRPSTKKELRKSFVKRCKNPSINEKLHKIRTLNSTLKCKEHDLAMINQLLDDPKLTARKYREWKVMNTLLIQDIYQQQRASPAPDDTDDTPQELKKSPSSPSVENSI.

In terms of domain architecture, SAM spans 7–72 (WSPKQVVDWT…LEAVDLLCAL (66 aa)). One can recognise a CRIC domain in the interval 80-174 (NMKNLVLKLR…TTVQKDCFVA (95 aa)). One can recognise a PDZ domain in the interval 211–293 (EVHLPNIKPG…GVVLLLKKRP (83 aa)). Disordered stretches follow at residues 309 to 334 (WKPP…DTSL) and 347 to 390 (PPPP…FLDQ). The region spanning 332 to 457 (TSLKKEKSAI…ARPRGHGRKA (126 aa)) is the DUF1170 domain. Ser-383 bears the Phosphoserine mark. The 100-residue stretch at 503 to 602 (HADCQGWLYK…WLNKLGSAVI (100 aa)) folds into the PH domain. Disordered stretches follow at residues 605–687 (ESTT…PDTV), 735–770 (LSSD…TKVS), and 868–899 (QQQR…ENSI). The segment covering 613–624 (CYSESEQEDPEI) has biased composition (acidic residues). Residues 634 to 662 (ASQTQSLTAQQASSSSPSLSGTSYSFSSL) are compositionally biased toward low complexity. A compositionally biased stretch (polar residues) spans 663–676 (ENTVKTPSSFPSSL). The span at 735 to 745 (LSSDDTSSLSS) shows a compositional bias: low complexity. Over residues 761-770 (IMDKEETKVS) the composition is skewed to basic and acidic residues. Residues 851–899 (KYREWKVMNTLLIQDIYQQQRASPAPDDTDDTPQELKKSPSSPSVENSI) are required for interaction with CYTH2. Position 873 is a phosphoserine (Ser-873). Residues 889 to 899 (SPSSPSVENSI) show a composition bias toward polar residues.

It belongs to the CNKSR family.

Its function is as follows. Required for hepatocyte growth factor (HGF)-dependent activation of Arf6 and HGF-stimulated cell migration. This Homo sapiens (Human) protein is CNK3/IPCEF1 fusion protein (CNK3/IPCEF1).